Here is a 156-residue protein sequence, read N- to C-terminus: Small ribosomal subunit protein bS6 (156 aa).

The disordered stretch occupies residues 98–156 (GHDFRDQRSHHGQAGEFRKREPQQKSKEQSEFSKEKKSFSKSVTKKTVVSKPKETKEEK). Positions 113–135 (EFRKREPQQKSKEQSEFSKEKKS) are enriched in basic and acidic residues. Positions 137 to 147 (SKSVTKKTVVS) are enriched in low complexity.

The protein belongs to the bacterial ribosomal protein bS6 family.

Functionally, binds together with bS18 to 16S ribosomal RNA. The protein is Small ribosomal subunit protein bS6 of Mycoplasmopsis synoviae (strain 53) (Mycoplasma synoviae).